Consider the following 448-residue polypeptide: MNVYELNMDGLVGQTHHYAGLSSGNIASTNNALSISNPQAAARQGLEKMRRLYNMGLKQGLLPPHQRPNLNLLYQLGFKGTPSEQINKAYKTAPELLSACYSASCMWTANAATVSASVDTEDNKVHFTAANLISNLHRHQEADFSKKLLEFIFSNSDYFNHHPLLPKSMGTSDEGAANHNRLCQSHAHSGINLFVYGKKVLGNHQFEQSPIKYPARQTKEASEAIARNHLLNPERVIFACQNPLAIDQGVFHNDVISVANEHVFLVHEEAFYNQTYVLDQLREKADFPLVIIQISKEQISVSEAVDTYLFNSQLITLPDQKNMILIAPAECQANLKVKTCIDGLVADPQNPINSVYYLDLKQSMRNGGGPACLRLRVPLNDYELKAMHQGILIDNDLLDILDKWVLKYYRTELKISDLADPQLLYECLDALDELTQILKLGSIYPFQS.

Substrate is bound by residues 19–28 (AGLSSGNIAS), asparagine 110, and 137–138 (HR). The active site involves glutamate 174. Position 216 (arginine 216) interacts with substrate. Residue histidine 252 is part of the active site. The substrate site is built by aspartate 254 and asparagine 366. Cysteine 372 serves as the catalytic Nucleophile.

Belongs to the succinylarginine dihydrolase family. As to quaternary structure, homodimer.

It catalyses the reaction N(2)-succinyl-L-arginine + 2 H2O + 2 H(+) = N(2)-succinyl-L-ornithine + 2 NH4(+) + CO2. It participates in amino-acid degradation; L-arginine degradation via AST pathway; L-glutamate and succinate from L-arginine: step 2/5. Its function is as follows. Catalyzes the hydrolysis of N(2)-succinylarginine into N(2)-succinylornithine, ammonia and CO(2). The chain is N-succinylarginine dihydrolase from Legionella pneumophila (strain Lens).